Consider the following 312-residue polypeptide: MSRPRIVFMGTPEFAVSSLAACFELGDVVAVVTQPDKPKGRGNTVTAPPVKELALSRGVPVLQPTKLRTPPFAEELRQYAPDVCVVTAYGRILPKDLLELPTHGCVNVHGSLLPRFRGAAPIQWAIAHGDTETGVSLMVMDEGLDTGPVLAMKRMAIAPDETSASLYPKLAALGGEVLREFLPAYLSGELKPVPQPSEGMVLAPIIEKDQGRLDFTKPAVELERRLRAFTPWPGAFTTLGGKLLKVHRAQARGGSGAPGTVLASGPDGIEVACGEGSLVLLDLQPEGKRVMRAADFLQGHKLAPGSQPFVAG.

(6S)-5,6,7,8-tetrahydrofolate is bound at residue 111-114 (SLLP).

It belongs to the Fmt family.

The enzyme catalyses L-methionyl-tRNA(fMet) + (6R)-10-formyltetrahydrofolate = N-formyl-L-methionyl-tRNA(fMet) + (6S)-5,6,7,8-tetrahydrofolate + H(+). Its function is as follows. Attaches a formyl group to the free amino group of methionyl-tRNA(fMet). The formyl group appears to play a dual role in the initiator identity of N-formylmethionyl-tRNA by promoting its recognition by IF2 and preventing the misappropriation of this tRNA by the elongation apparatus. This Myxococcus xanthus (strain DK1622) protein is Methionyl-tRNA formyltransferase.